The chain runs to 408 residues: G patch domain-containing protein 4 (408 aa).

Met-1 is subject to N-acetylmethionine. Thr-4 is modified (phosphothreonine). A G-patch domain is found at 11–57 (GMKFAEEQLLKHGWTQGKGLGRKENGITQALRVTLKQDTYGVGHDPA). A Glycyl lysine isopeptide (Lys-Gly) (interchain with G-Cter in SUMO2) cross-link involves residue Lys-46. Thr-116 carries the phosphothreonine modification. Disordered stretches follow at residues 116–141 (TSSGEKPDKDWESCSDDDSQEPKPPN) and 187–408 (GQDP…KKRD). Phosphoserine occurs at positions 128 and 130. Basic and acidic residues-rich tracts occupy residues 222-236 (RSAEKYSEHTDESIR), 245-257 (HQEERVTDEREGT), and 274-283 (LKNREHVDRS). Residues 340 to 354 (EEDLNTEDEEVEEAL) show a composition bias toward acidic residues. The segment covering 358-372 (GTREAESRSCSDQKR) has biased composition (basic and acidic residues). Positions 398–408 (KAKKKKQKKRD) are enriched in basic residues.

The sequence is that of G patch domain-containing protein 4 (GPATCH4) from Bos taurus (Bovine).